The sequence spans 749 residues: ATP-dependent zinc metalloprotease FtsH 3 (749 aa).

Residues 1–17 (MTGDPPERRSNGDRLPA) show a composition bias toward basic and acidic residues. Residues 1–67 (MTGDPPERRS…GRNGGGMRPF (67 aa)) are disordered. Residues 1–75 (MTGDPPERRS…PFRFPGGRWG (75 aa)) lie on the Cytoplasmic side of the membrane. Residues 76 to 96 (ILVFILVLLGLNWWISSNALA) form a helical membrane-spanning segment. Topologically, residues 97–186 (PSERVRVPYS…NASPADNGPS (90 aa)) are extracellular. The helical transmembrane segment at 187-207 (LLVSILLGFGPVILIIALFVF) threads the bilayer. At 208–749 (LSRRMAGAAG…LGGSVRAGDA (542 aa)) the chain is on the cytoplasmic side. 281–288 (GQPGTGKT) lines the ATP pocket. His-504 lines the Zn(2+) pocket. Glu-505 is an active-site residue. Zn(2+) contacts are provided by His-508 and Asp-580. A compositionally biased stretch (basic and acidic residues) spans 679-689 (GLEHMRPERVE). Residues 679–749 (GLEHMRPERV…LGGSVRAGDA (71 aa)) form a disordered region.

In the central section; belongs to the AAA ATPase family. This sequence in the C-terminal section; belongs to the peptidase M41 family. As to quaternary structure, homohexamer. Requires Zn(2+) as cofactor.

Its subcellular location is the cell membrane. In terms of biological role, acts as a processive, ATP-dependent zinc metallopeptidase for both cytoplasmic and membrane proteins. Plays a role in the quality control of integral membrane proteins. This chain is ATP-dependent zinc metalloprotease FtsH 3, found in Conexibacter woesei (strain DSM 14684 / CCUG 47730 / CIP 108061 / JCM 11494 / NBRC 100937 / ID131577).